The following is a 1060-amino-acid chain: Histone lysine demethylase PHF8 (1060 aa).

The segment at 41–92 (PVYCLCRLPYDVTRFMIECDMCQDWFHGSCVGVEEEKAADIDLYHCPNCEVL) adopts a PHD-type zinc-finger fold. A Phosphoserine; by CDK1 modification is found at serine 69. The disordered stretch occupies residues 100–120 (KRRGSSKGHDTHKGKPVKTGS). Positions 101-115 (RRGSSKGHDTHKGKP) are linker. At serine 120 the chain carries Phosphoserine; by CDK1. The JmjC domain maps to 231–387 (FSDTRLSNLV…MQLKAYEIEK (157 aa)). Threonine 280 is a substrate binding site. Fe cation contacts are provided by histidine 283 and aspartate 285. Position 300 (lysine 300) interacts with substrate. Residue histidine 355 participates in Fe cation binding. The segment covering 508–517 (AHSTSVSMSR) has biased composition (polar residues). Residues 508–534 (AHSTSVSMSRLSLPSKNGSKKKGLKPK) are disordered. The residue at position 651 (serine 651) is a Phosphoserine. At tyrosine 704 the chain carries Phosphotyrosine. Threonine 705 and threonine 706 each carry phosphothreonine. Serine 722 bears the Phosphoserine mark. Disordered stretches follow at residues 768 to 840 (QSSS…EQDS), 852 to 902 (YPSL…GTRV), and 915 to 1046 (KLAQ…KQRL). 2 stretches are compositionally biased toward low complexity: residues 769 to 778 (SSSSSPATSS) and 785 to 804 (GGQD…VSNS). Residues serine 804, serine 826, serine 834, serine 854, serine 857, and serine 880 each carry the phosphoserine modification. Residues 826–839 (SEEEEENASLDEQD) show a composition bias toward acidic residues. The span at 891-900 (KQDRPVREGT) shows a compositional bias: basic and acidic residues. A compositionally biased stretch (basic residues) spans 924–934 (AQKKKYIKKKP). Residues 1018–1030 (RRPSVGSQSNQAG) are compositionally biased toward polar residues.

It belongs to the JHDM1 histone demethylase family. JHDM1D subfamily. Interacts with POLR1B, UBTF, SETD1A, HCFC1, E2F1 and ZNF711. Interacts with ZNF263; recruited to the SIX3 promoter along with other proteins involved in chromatin modification and transcriptional corepression where it contributes to transcriptional repression. The cofactor is Fe(2+). Post-translationally, phosphorylation at Ser-69 and Ser-120 are required for dissociation from chromatin and accumulation of H4K20Me1 levels during prophase.

It localises to the nucleus. It is found in the nucleolus. The enzyme catalyses N(6),N(6)-dimethyl-L-lysyl(36)-[histone H3] + 2 2-oxoglutarate + 2 O2 = L-lysyl(36)-[histone H3] + 2 formaldehyde + 2 succinate + 2 CO2. It carries out the reaction N(6),N(6)-dimethyl-L-lysyl(9)-[histone H3] + 2 2-oxoglutarate + 2 O2 = L-lysyl(9)-[histone H3] + 2 formaldehyde + 2 succinate + 2 CO2. In terms of biological role, histone lysine demethylase with selectivity for the di- and monomethyl states that plays a key role cell cycle progression, rDNA transcription and brain development. Demethylates mono- and dimethylated histone H3 'Lys-9' residue (H3K9Me1 and H3K9Me2), dimethylated H3 'Lys-27' (H3K27Me2) and monomethylated histone H4 'Lys-20' residue (H4K20Me1). Acts as a transcription activator as H3K9Me1, H3K9Me2, H3K27Me2 and H4K20Me1 are epigenetic repressive marks. Involved in cell cycle progression by being required to control G1-S transition. Acts as a coactivator of rDNA transcription, by activating polymerase I (pol I) mediated transcription of rRNA genes. Required for brain development, probably by regulating expression of neuron-specific genes. Only has activity toward H4K20Me1 when nucleosome is used as a substrate and when not histone octamer is used as substrate. May also have weak activity toward dimethylated H3 'Lys-36' (H3K36Me2), however, the relevance of this result remains unsure in vivo. Specifically binds trimethylated 'Lys-4' of histone H3 (H3K4me3), affecting histone demethylase specificity: has weak activity toward H3K9Me2 in absence of H3K4me3, while it has high activity toward H3K9me2 when binding H3K4me3. Positively modulates transcription of histone demethylase KDM5C, acting synergistically with transcription factor ARX; synergy may be related to enrichment of histone H3K4me3 in regulatory elements. The protein is Histone lysine demethylase PHF8 (PHF8) of Homo sapiens (Human).